The sequence spans 180 residues: CDP-archaeol synthase (180 aa).

The next 5 membrane-spanning stretches (helical) occupy residues 5 to 25 (LVATAFWAMLPAYVPNNAAVL), 54 to 74 (AVGTLTGVVLALALNRIAEPA), 78 to 98 (LGVDLPTFALPAAFALAFGAM), 118 to 138 (AFPGLDQLDFVVVALAAVFVV), and 142 to 162 (WALAVFTPSVLVVVLVMTPIL).

The protein belongs to the CDP-archaeol synthase family. The cofactor is Mg(2+).

The protein localises to the cell membrane. It carries out the reaction 2,3-bis-O-(geranylgeranyl)-sn-glycerol 1-phosphate + CTP + H(+) = CDP-2,3-bis-O-(geranylgeranyl)-sn-glycerol + diphosphate. It functions in the pathway membrane lipid metabolism; glycerophospholipid metabolism. Its function is as follows. Catalyzes the formation of CDP-2,3-bis-(O-geranylgeranyl)-sn-glycerol (CDP-archaeol) from 2,3-bis-(O-geranylgeranyl)-sn-glycerol 1-phosphate (DGGGP) and CTP. This reaction is the third ether-bond-formation step in the biosynthesis of archaeal membrane lipids. In Halorubrum lacusprofundi (strain ATCC 49239 / DSM 5036 / JCM 8891 / ACAM 34), this protein is CDP-archaeol synthase.